Here is a 214-residue protein sequence, read N- to C-terminus: Small ribosomal subunit protein uS3c (214 aa).

The KH type-2 domain occupies 39–111 (IRTYLNKLAK…QLTINIIEVE (73 aa)).

It belongs to the universal ribosomal protein uS3 family. Part of the 30S ribosomal subunit.

Its subcellular location is the plastid. The protein localises to the chloroplast. The polypeptide is Small ribosomal subunit protein uS3c (rps3) (Trieres chinensis (Marine centric diatom)).